We begin with the raw amino-acid sequence, 64 residues long: DNA gyrase inhibitor YacG (64 aa).

Zn(2+) contacts are provided by Cys-9, Cys-12, Cys-28, and Cys-32. The tract at residues Lys-45–Pro-64 is disordered. Residues Ser-54–Pro-64 are compositionally biased toward acidic residues.

It belongs to the DNA gyrase inhibitor YacG family. Interacts with GyrB. Zn(2+) is required as a cofactor.

Its function is as follows. Inhibits all the catalytic activities of DNA gyrase by preventing its interaction with DNA. Acts by binding directly to the C-terminal domain of GyrB, which probably disrupts DNA binding by the gyrase. The polypeptide is DNA gyrase inhibitor YacG (Klebsiella pneumoniae subsp. pneumoniae (strain ATCC 700721 / MGH 78578)).